Reading from the N-terminus, the 741-residue chain is Phage T7 exclusion protein (741 aa).

The region spanning 27-334 is the KAP NTPase domain; it reads FGNIAENISR…NSLIFLYPGM (308 aa).

Its function is as follows. Responsible for the exclusion of phage T7 by plasmid F. Growth of bacteriophage T7 is inhibited in cells of E.coli that carries the plasmid F. The chain is Phage T7 exclusion protein (pifA) from Escherichia coli (strain K12).